The following is a 164-amino-acid chain: Endoribonuclease YbeY (164 aa).

The Zn(2+) site is built by His-130, His-134, and His-140.

The protein belongs to the endoribonuclease YbeY family. Zn(2+) serves as cofactor.

The protein resides in the cytoplasm. Single strand-specific metallo-endoribonuclease involved in late-stage 70S ribosome quality control and in maturation of the 3' terminus of the 16S rRNA. In Streptococcus mutans serotype c (strain ATCC 700610 / UA159), this protein is Endoribonuclease YbeY.